The chain runs to 143 residues: Large ribosomal subunit protein uL11 (143 aa).

It belongs to the universal ribosomal protein uL11 family. As to quaternary structure, part of the ribosomal stalk of the 50S ribosomal subunit. Interacts with L10 and the large rRNA to form the base of the stalk. L10 forms an elongated spine to which L12 dimers bind in a sequential fashion forming a multimeric L10(L12)X complex. One or more lysine residues are methylated.

Functionally, forms part of the ribosomal stalk which helps the ribosome interact with GTP-bound translation factors. The chain is Large ribosomal subunit protein uL11 from Polynucleobacter necessarius subsp. necessarius (strain STIR1).